Consider the following 301-residue polypeptide: Probable alpha-L-glutamate ligase (301 aa).

The region spanning 104 to 287 (LQLLSRRGIG…VAGMIIEHLE (184 aa)) is the ATP-grasp domain. Residues K141, 178-179 (EY), D187, and 211-213 (RSN) each bind ATP. Mg(2+) contacts are provided by D248, E260, and N262. Residues D248, E260, and N262 each coordinate Mn(2+).

It belongs to the RimK family. Mg(2+) serves as cofactor. The cofactor is Mn(2+).

This chain is Probable alpha-L-glutamate ligase, found in Pseudomonas putida (strain W619).